Here is a 605-residue protein sequence, read N- to C-terminus: E3 ubiquitin-protein ligase synoviolin A (605 aa).

The chain crosses the membrane as a helical span at residues 1 to 19 (MTGASLALTAAVVAHAYYL). The Lumenal portion of the chain corresponds to 20–35 (KNQFYPTVVYLTKSSP). A helical transmembrane segment spans residues 36-56 (SMAVLYIQAFVLVFLLGKFMG). The Cytoplasmic segment spans residues 57–92 (KVFFGQLRAAEMEHLLERSWYAVTETCLAFTVFRDD). The chain crosses the membrane as a helical span at residues 93 to 113 (FSPRFVALFTLLLFLKCFHWL). Residues 114 to 129 (AEDRVDFMERSPNISW) lie on the Lumenal side of the membrane. Residues 130-150 (LFHFRILALMLLLGVLDAFFV) traverse the membrane as a helical segment. The Cytoplasmic segment spans residues 151–163 (SHAYHSLVIRGAS). A helical transmembrane segment spans residues 164 to 184 (VQLVFGFEYAILMTVILTVFI). The Lumenal segment spans residues 185–218 (KYILHSVDLQSENPWDNKAVYMLYTELFTGFIKV). Residues 219 to 239 (LLYVAFMTIMVKVHTFPLFAI) form a helical membrane-spanning segment. The tract at residues 230–264 (KVHTFPLFAIRPMYLAMRQFKKAVTDAIMSRRAIR) is interaction with p53/TP53. Residues 240–605 (RPMYLAMRQF…KLETGTTDSQ (366 aa)) are Cytoplasmic-facing. The Zn(2+) site is built by C285, C288, C301, H303, H306, C309, C320, and C323. The RING-type; atypical zinc-finger motif lies at 285–324 (CIICREEMVTGAKRLPCNHIFHTSCLRSWFQRQQTCPTCR). The segment covering 334 to 355 (TQPQTPTEQQNQHQNQAQQQPT) has biased composition (low complexity). A disordered region spans residues 334 to 433 (TQPQTPTEQQ…QPGAALPGFP (100 aa)). The span at 356 to 391 (PVIPPQPNFPPGILPPFPPGMFPLWPPMGPFPPVPG) shows a compositional bias: pro residues. Over residues 403–414 (PGSSSGSSPRPG) the composition is skewed to low complexity. The span at 415–424 (ETSNVGSESQ) shows a compositional bias: polar residues. Positions 465–496 (EELRAMEGHERQNLEARLQCLQNIHTLLDAAM) form a coiled coil. The tract at residues 513–605 (QPPISSTSTS…KLETGTTDSQ (93 aa)) is disordered. A compositionally biased stretch (low complexity) spans 516–539 (ISSTSTSTSSAASASTAPTTSNIS). Polar residues predominate over residues 546 to 555 (DTTSTVTNTE). The segment covering 556-579 (SSQQSAPPAPVSVETLSGAEGGET) has biased composition (low complexity).

The protein belongs to the HRD1 family. In terms of assembly, homodimer.

Its subcellular location is the endoplasmic reticulum membrane. The catalysed reaction is S-ubiquitinyl-[E2 ubiquitin-conjugating enzyme]-L-cysteine + [acceptor protein]-L-lysine = [E2 ubiquitin-conjugating enzyme]-L-cysteine + N(6)-ubiquitinyl-[acceptor protein]-L-lysine.. Its pathway is protein modification; protein ubiquitination. Functionally, E3 ubiquitin-protein ligase which accepts ubiquitin specifically from endoplasmic reticulum-associated UBC7 E2 ligase and transfers it to substrates, promoting their degradation. Component of the endoplasmic reticulum quality control (ERQC) system also called ER-associated degradation (ERAD) involved in ubiquitin-dependent degradation of misfolded endoplasmic reticulum proteins. Also promotes the degradation of normal but naturally short-lived proteins. Protects cells from ER stress-induced apoptosis. Sequesters p53 in the cytoplasm and promotes its degradation, thereby negatively regulating its biological function in transcription, cell cycle regulation and apoptosis. In Xenopus laevis (African clawed frog), this protein is E3 ubiquitin-protein ligase synoviolin A (syvn1-a).